A 254-amino-acid chain; its full sequence is GTP cyclohydrolase III (254 aa).

Belongs to the archaeal-type GTP cyclohydrolase family.

The catalysed reaction is GTP + 3 H2O = 2-amino-5-formylamino-6-(5-phospho-D-ribosylamino)pyrimidin-4(3H)-one + 2 phosphate + 2 H(+). Its function is as follows. Catalyzes the formation of 2-amino-5-formylamino-6-ribofuranosylamino-4(3H)-pyrimidinone ribonucleotide monophosphate and inorganic phosphate from GTP. Also has an independent pyrophosphate phosphohydrolase activity. The polypeptide is GTP cyclohydrolase III (Methanobrevibacter smithii (strain ATCC 35061 / DSM 861 / OCM 144 / PS)).